Here is an 816-residue protein sequence, read N- to C-terminus: Leucine--tRNA ligase (816 aa).

A 'HIGH' region motif is present at residues 42-52 (PYPSGSLHMGH). Positions 574–578 (KMSKS) match the 'KMSKS' region motif. Lysine 577 contributes to the ATP binding site.

This sequence belongs to the class-I aminoacyl-tRNA synthetase family.

It localises to the cytoplasm. The enzyme catalyses tRNA(Leu) + L-leucine + ATP = L-leucyl-tRNA(Leu) + AMP + diphosphate. This is Leucine--tRNA ligase from Ruthia magnifica subsp. Calyptogena magnifica.